We begin with the raw amino-acid sequence, 457 residues long: Bifunctional protein GlmU (457 aa).

The segment at 1 to 230 is pyrophosphorylase; sequence MSKRYAVVLA…FEESLGVNDR (230 aa). Residues 9 to 12, Lys23, Gln73, and 78 to 79 contribute to the UDP-N-acetyl-alpha-D-glucosamine site; these read LAAG and GT. Mg(2+) is bound at residue Asp103. UDP-N-acetyl-alpha-D-glucosamine contacts are provided by Gly140, Glu155, Asn170, and Asn228. Residue Asn228 coordinates Mg(2+). The interval 231-251 is linker; the sequence is IALAEASKLMQRRINENHMRN. An N-acetyltransferase region spans residues 252–457; it reads GVTLVNPEST…GYAKHLNHSK (206 aa). Residues Arg333 and Lys351 each coordinate UDP-N-acetyl-alpha-D-glucosamine. The Proton acceptor role is filled by His363. 2 residues coordinate UDP-N-acetyl-alpha-D-glucosamine: Tyr366 and Asn377. Acetyl-CoA-binding positions include 386-387, Ala423, and Arg440; that span reads NY.

In the N-terminal section; belongs to the N-acetylglucosamine-1-phosphate uridyltransferase family. It in the C-terminal section; belongs to the transferase hexapeptide repeat family. In terms of assembly, homotrimer. Requires Mg(2+) as cofactor.

The protein resides in the cytoplasm. It catalyses the reaction alpha-D-glucosamine 1-phosphate + acetyl-CoA = N-acetyl-alpha-D-glucosamine 1-phosphate + CoA + H(+). It carries out the reaction N-acetyl-alpha-D-glucosamine 1-phosphate + UTP + H(+) = UDP-N-acetyl-alpha-D-glucosamine + diphosphate. The protein operates within nucleotide-sugar biosynthesis; UDP-N-acetyl-alpha-D-glucosamine biosynthesis; N-acetyl-alpha-D-glucosamine 1-phosphate from alpha-D-glucosamine 6-phosphate (route II): step 2/2. It functions in the pathway nucleotide-sugar biosynthesis; UDP-N-acetyl-alpha-D-glucosamine biosynthesis; UDP-N-acetyl-alpha-D-glucosamine from N-acetyl-alpha-D-glucosamine 1-phosphate: step 1/1. It participates in bacterial outer membrane biogenesis; LPS lipid A biosynthesis. Functionally, catalyzes the last two sequential reactions in the de novo biosynthetic pathway for UDP-N-acetylglucosamine (UDP-GlcNAc). The C-terminal domain catalyzes the transfer of acetyl group from acetyl coenzyme A to glucosamine-1-phosphate (GlcN-1-P) to produce N-acetylglucosamine-1-phosphate (GlcNAc-1-P), which is converted into UDP-GlcNAc by the transfer of uridine 5-monophosphate (from uridine 5-triphosphate), a reaction catalyzed by the N-terminal domain. The sequence is that of Bifunctional protein GlmU from Listeria monocytogenes serovar 1/2a (strain ATCC BAA-679 / EGD-e).